The primary structure comprises 98 residues: Large ribosomal subunit protein bL28 (98 aa).

Belongs to the bacterial ribosomal protein bL28 family.

The chain is Large ribosomal subunit protein bL28 from Chelativorans sp. (strain BNC1).